The primary structure comprises 89 residues: Small ribosomal subunit protein uS15 (89 aa).

The protein belongs to the universal ribosomal protein uS15 family. Part of the 30S ribosomal subunit. Forms a bridge to the 50S subunit in the 70S ribosome, contacting the 23S rRNA.

One of the primary rRNA binding proteins, it binds directly to 16S rRNA where it helps nucleate assembly of the platform of the 30S subunit by binding and bridging several RNA helices of the 16S rRNA. Functionally, forms an intersubunit bridge (bridge B4) with the 23S rRNA of the 50S subunit in the ribosome. This chain is Small ribosomal subunit protein uS15, found in Lacticaseibacillus casei (strain BL23) (Lactobacillus casei).